Reading from the N-terminus, the 161-residue chain is Myosin regulatory light chain A, smooth adductor muscle (161 aa).

Ala-1 bears the Blocked amino end (Ala) mark. EF-hand domains are found at residues 20 to 55 (KLMQ…LGRT) and 89 to 124 (DTEE…MGDN). Ca(2+)-binding residues include Asp-33, Asn-35, Asp-37, and Asp-44.

In terms of biological role, in molluscan muscle, calcium regulation is associated with myosin rather than with actin. Muscle myosin contains two types of light chains: the catalytic light chain, essential for ATPase activity, and the regulatory light chain, a calcium-binding protein responsible for Ca(2+) dependent binding and Ca(2+) dependent Mg-ATPase activity. The polypeptide is Myosin regulatory light chain A, smooth adductor muscle (Mizuhopecten yessoensis (Japanese scallop)).